A 484-amino-acid chain; its full sequence is ATP synthase subunit beta (484 aa).

Position 152-159 (152-159 (GGAGVGKT)) interacts with ATP.

It belongs to the ATPase alpha/beta chains family. F-type ATPases have 2 components, CF(1) - the catalytic core - and CF(0) - the membrane proton channel. CF(1) has five subunits: alpha(3), beta(3), gamma(1), delta(1), epsilon(1). CF(0) has three main subunits: a(1), b(2) and c(9-12). The alpha and beta chains form an alternating ring which encloses part of the gamma chain. CF(1) is attached to CF(0) by a central stalk formed by the gamma and epsilon chains, while a peripheral stalk is formed by the delta and b chains.

Its subcellular location is the cell inner membrane. The catalysed reaction is ATP + H2O + 4 H(+)(in) = ADP + phosphate + 5 H(+)(out). In terms of biological role, produces ATP from ADP in the presence of a proton gradient across the membrane. The catalytic sites are hosted primarily by the beta subunits. The polypeptide is ATP synthase subunit beta (Campylobacter lari (strain RM2100 / D67 / ATCC BAA-1060)).